The sequence spans 90 residues: U7-theraphotoxin-Hhn1a 1 (90 aa).

Residues 1–19 form the signal peptide; sequence MKTAIFTVVLALAVFAVLS. Positions 20-50 are excised as a propeptide; it reads FGWEANEKALSEEFTELIHEKEAASETEARE. 3 disulfides stabilise this stretch: cysteine 51–cysteine 65, cysteine 58–cysteine 70, and cysteine 64–cysteine 81.

The protein belongs to the neurotoxin 10 (Hwtx-1) family. 13 (Hntx-13) subfamily. As to expression, expressed by the venom gland.

It is found in the secreted. In terms of biological role, ion channel inhibitor. The protein is U7-theraphotoxin-Hhn1a 1 of Cyriopagopus hainanus (Chinese bird spider).